Reading from the N-terminus, the 247-residue chain is Anionic trypsin (247 aa).

The first 15 residues, 1–15 (MNPLLILAFLGAAVA), serve as a signal peptide directing secretion. The propeptide at 16–23 (TPTDDDDK) is activation peptide. A Peptidase S1 domain is found at 24 to 244 (IVGGYTCEEN…FVDWIQSTIA (221 aa)). 6 cysteine pairs are disulfide-bonded: Cys30-Cys160, Cys48-Cys64, Cys132-Cys233, Cys139-Cys206, Cys171-Cys185, and Cys196-Cys220. His63 acts as the Charge relay system in catalysis. Glu75, Asn77, Val80, and Glu85 together coordinate Ca(2+). The Charge relay system role is filled by Asp107. The Charge relay system role is filled by Ser200.

This sequence belongs to the peptidase S1 family. Ca(2+) serves as cofactor.

It localises to the secreted. It is found in the extracellular space. It catalyses the reaction Preferential cleavage: Arg-|-Xaa, Lys-|-Xaa.. The protein is Anionic trypsin of Canis lupus familiaris (Dog).